We begin with the raw amino-acid sequence, 224 residues long: Flagellar L-ring protein (224 aa).

The N-terminal stretch at 1 to 15 (MLRYLMVGSLLVLAG) is a signal peptide. The N-palmitoyl cysteine moiety is linked to residue C16. C16 is lipidated: S-diacylglycerol cysteine.

This sequence belongs to the FlgH family. The basal body constitutes a major portion of the flagellar organelle and consists of four rings (L,P,S, and M) mounted on a central rod.

It localises to the cell outer membrane. The protein localises to the bacterial flagellum basal body. Functionally, assembles around the rod to form the L-ring and probably protects the motor/basal body from shearing forces during rotation. This Shewanella amazonensis (strain ATCC BAA-1098 / SB2B) protein is Flagellar L-ring protein.